The primary structure comprises 276 residues: Large ribosomal subunit protein uL2 (276 aa).

Disordered regions lie at residues 37–59 (QIQKSGRNNNGHITTRHKGGGHK) and 225–276 (VMNP…RHKR). Polar residues predominate over residues 39 to 49 (QKSGRNNNGHI). Residues 50 to 59 (TTRHKGGGHK) are compositionally biased toward basic residues.

This sequence belongs to the universal ribosomal protein uL2 family. In terms of assembly, part of the 50S ribosomal subunit. Forms a bridge to the 30S subunit in the 70S ribosome.

One of the primary rRNA binding proteins. Required for association of the 30S and 50S subunits to form the 70S ribosome, for tRNA binding and peptide bond formation. It has been suggested to have peptidyltransferase activity; this is somewhat controversial. Makes several contacts with the 16S rRNA in the 70S ribosome. The protein is Large ribosomal subunit protein uL2 of Ralstonia pickettii (strain 12J).